Here is a 164-residue protein sequence, read N- to C-terminus: Hydroxylaminobenzene mutase HabB (164 aa).

The next 4 membrane-spanning stretches (helical) occupy residues 16-36, 50-70, 78-98, and 121-141; these read LLQL…LLPM, GVLN…LSLG, FGFA…AGFW, and LIAF…ALAL.

The protein localises to the cell membrane. The enzyme catalyses N-phenylhydroxylamine = 2-aminophenol. Addition of ZnSO(4) decreases the activity to 70%. In terms of biological role, catalyzes the rearrangement of hydroxylaminobenzene to 2-aminophenol. This chain is Hydroxylaminobenzene mutase HabB (habB), found in Ectopseudomonas oleovorans (Pseudomonas oleovorans).